The sequence spans 385 residues: Trehalose-phosphate phosphatase A (385 aa).

Positions 1-21 (MDMKSGHSSPVMTDSPPISNS) are disordered.

The protein belongs to the trehalose phosphatase family. A divalent metal cation serves as cofactor. In terms of tissue distribution, expressed in flowers.

It carries out the reaction alpha,alpha-trehalose 6-phosphate + H2O = alpha,alpha-trehalose + phosphate. Its pathway is glycan biosynthesis; trehalose biosynthesis. In terms of biological role, removes the phosphate from trehalose 6-phosphate to produce free trehalose. Trehalose accumulation in plant may improve abiotic stress tolerance. This is Trehalose-phosphate phosphatase A (TPPA) from Arabidopsis thaliana (Mouse-ear cress).